Reading from the N-terminus, the 185-residue chain is CASP-like protein SELMODRAFT_413556 (185 aa).

The Cytoplasmic portion of the chain corresponds to 1–89 (MATLPLSLIF…AVTVLFYLAK (89 aa)). A helical transmembrane segment spans residues 90-110 (LVFGILGLALSIIWLLHIIVF). Topologically, residues 111 to 131 (MLVNPPAFPFLNQVFIQLDSA) are extracellular. The chain crosses the membrane as a helical span at residues 132–152 (WGLLGTTAFAIFCYYLIMSVI). At 153–163 (SGEMHSIHPMK) the chain is on the cytoplasmic side. The chain crosses the membrane as a helical span at residues 164–184 (YQGTLMNSFLFNVAIILLCST). Position 185 (R185) is a topological domain, extracellular.

This sequence belongs to the Casparian strip membrane proteins (CASP) family. In terms of assembly, homodimer and heterodimers.

It is found in the cell membrane. This Selaginella moellendorffii (Spikemoss) protein is CASP-like protein SELMODRAFT_413556.